The sequence spans 570 residues: MGNWVVNEGISIFVILVWLGMNVFLFVWYYRVYDIPDKFFYTRKLLGSALALARAPAACLNFNCMLILLPVCRNLLSFLRGSSACCSTRIRRQLDRNLTFHKMVAWMIALHTAIHTIAHLFNVEWCVNARVNNSDPYSIALSDIGDKPNETYLNFVRQRIKNPEGGLYVAVTRLAGITGVVITLCLILIITSSTKTIRRSYFEVFWYTHHLFVIFFIGLAIHGAQRIVRGQTAESLLKHQPRNCYQNISQWGKIENCPIPEFSGNPPMTWKWIVGPMFLYLCERLVRFWRSQQKVVITKVVTHPFKTIELQMKKKGFKMEVGQYIFVKCPVVSKLEWHPFTLTSAPEEDFFSIHIRIVGDWTEGLFKACGCDKQEFQDAWKLPKIAVDGPFGTASEDVFSYEVVMLVGAGIGVTPFASILKSVWYKYCNKAPNLRLKKIYFYWLCRDTHAFEWFADLLQLLETQMQEKNNTDFLSYNICLTGWDESQASHFAMHHDEEKDVITGLKQKTLYGRPNWDNEFKTIGSQHPNTRIGVFLCGPEALADTLNKQCISNSDSGPRGVHFIFNKENF.

Topologically, residues 2–9 (GNWVVNEG) are cytoplasmic. The chain crosses the membrane as a helical span at residues 10-36 (ISIFVILVWLGMNVFLFVWYYRVYDIP). At 37-46 (DKFFYTRKLL) the chain is on the extracellular side. Residues 47 to 72 (GSALALARAPAACLNFNCMLILLPVC) form a helical membrane-spanning segment. Residues 54–286 (RAPAACLNFN…MFLYLCERLV (233 aa)) enclose the Ferric oxidoreductase domain. Over 73–95 (RNLLSFLRGSSACCSTRIRRQLD) the chain is Cytoplasmic. Residues 96–130 (RNLTFHKMVAWMIALHTAIHTIAHLFNVEWCVNAR) traverse the membrane as a helical segment. 2 residues coordinate heme b: His-101 and His-115. The Extracellular portion of the chain corresponds to 131–163 (VNNSDPYSIALSDIGDKPNETYLNFVRQRIKNP). N-linked (GlcNAc...) asparagine glycans are attached at residues Asn-132 and Asn-149. A Glycyl lysine isopeptide (Lys-Gly) (interchain with G-Cter in ubiquitin) cross-link involves residue Lys-161. A helical membrane pass occupies residues 164 to 194 (EGGLYVAVTRLAGITGVVITLCLILIITSST). At 195-203 (KTIRRSYFE) the chain is on the cytoplasmic side. Positions 199 and 200 each coordinate FAD. A helical membrane pass occupies residues 204–222 (VFWYTHHLFVIFFIGLAIH). Trp-206, His-209, His-222, Arg-226, and Ile-227 together coordinate heme b. Residues 223–267 (GAQRIVRGQTAESLLKHQPRNCYQNISQWGKIENCPIPEFSGNPP) lie on the Extracellular side of the membrane. Asn-247 carries an N-linked (GlcNAc...) asparagine glycan. Heme b contacts are provided by Met-268, Tyr-280, and Arg-287. Residues 268–285 (MTWKWIVGPMFLYLCERL) form a helical membrane-spanning segment. The Cytoplasmic portion of the chain corresponds to 286-570 (VRFWRSQQKV…VHFIFNKENF (285 aa)). Positions 287–397 (RFWRSQQKVV…DGPFGTASED (111 aa)) constitute an FAD-binding FR-type domain. Glycyl lysine isopeptide (Lys-Gly) (interchain with G-Cter in ubiquitin) cross-links involve residues Lys-294, Lys-299, Lys-306, Lys-328, and Lys-334. FAD contacts are provided by Trp-337, His-338, Pro-339, Thr-341, His-354, Arg-356, Trp-361, and Thr-362. Residue Lys-381 forms a Glycyl lysine isopeptide (Lys-Gly) (interchain with G-Cter in ubiquitin) linkage. Residues Ile-411, Arg-446, and Thr-481 each contribute to the NADPH site. Lys-506 is covalently cross-linked (Glycyl lysine isopeptide (Lys-Gly) (interchain with G-Cter in ubiquitin)). Residue Arg-513 participates in NADPH binding. Lys-567 is covalently cross-linked (Glycyl lysine isopeptide (Lys-Gly) (interchain with G-Cter in ubiquitin)).

In terms of assembly, component of the phagocyte NADPH oxidase core complex/cytochrome b558 complex, composed of CYBB (heavy chain (beta)) and CYBA (light chain (alpha)). Component of the phagocyte NADPH oxidase complex composed of an obligatory core heterodimer formed by the membrane proteins CYBA and CYBB and the cytosolic regulatory subunits NCF1/p47-phox, NCF2/p67-phox, NCF4/p40-phox and the small GTPase RAC1 or RAC2. Interacts with NCF1 (phosphorylated form). Interacts with NCF2; the interaction is enhanced in the presence of GBP7. Interacts with RAC2. Interacts with RAC1. Interacts with calprotectin (S100A8/9). Interacts with NRROS; the interaction is direct and impairs formation of a stable NADPH oxidase complex. Interacts with CYBC1; CYBC1 may act as a chaperone stabilizing Cytochrome b-245 heterodimer. The CYBA-CYBB complex interacts with GBP7. The cofactor is FAD. Glycosylated. Post-translationally, phosphorylated on Ser and Thr residues by PKC during neutrophils activation. Phosphorylation enhances the NADPH oxidase activity and stimulates its interaction with RAC2, NCF2/p67-phox, and NCF1/p47-phox. In terms of processing, undergoes 'Lys-48'-linked polyubiquitination, likely by RNF145, triggering endoplasmic reticulum-associated degradation.

The protein localises to the cell membrane. It catalyses the reaction NADPH + 2 O2 = 2 superoxide + NADP(+) + H(+). Catalytic subunit of the phagocyte NADPH oxidase complex that mediates the transfer of electrons from cytosolic NADPH to O2 to produce the superoxide anion (O2(-)). In the activated complex, electrons are first transferred from NADPH to flavin adenine dinucleotide (FAD) and subsequently transferred via two heme molecules to molecular oxygen, producing superoxide through an outer-sphere reaction. Activation of the NADPH oxidase complex is initiated by the assembly of cytosolic subunits of the NADPH oxidase complex with the core NADPH oxidase complex to form a complex at the plasma membrane or phagosomal membrane. This activation process is initiated by phosphorylation dependent binding of the cytosolic NCF1/p47-phox subunit to the C-terminus of CYBA/p22-phox. NADPH oxidase complex assembly is impaired through interaction with NRROS. This chain is NADPH oxidase 2, found in Bos taurus (Bovine).